Reading from the N-terminus, the 496-residue chain is Coiled-coil domain-containing protein 77 (496 aa).

The segment at 1-42 (MDFSPPHGLRGGRSPSLQDTTISSSHTQKNGGDSTPLPPINE) is disordered. Residues 15-33 (PSLQDTTISSSHTQKNGGD) show a composition bias toward polar residues. A coiled-coil region spans residues 51-113 (RELLEYYRKK…KALSDMQVYL (63 aa)). Residues 170–208 (QRTVQSGDPFDRKVQRSGRAGVKQVPLKAPGKQDRTKAA) form a disordered region. A coiled-coil region spans residues 214–495 (QILLLQVEAL…IYGLENELRI (282 aa)).

This Xenopus laevis (African clawed frog) protein is Coiled-coil domain-containing protein 77 (ccdc77).